A 270-amino-acid polypeptide reads, in one-letter code: Undecaprenyl-diphosphatase 1 (270 aa).

6 consecutive transmembrane segments (helical) span residues 41–61, 88–108, 117–137, 192–212, 218–238, and 250–270; these read IEGF…VLLV, FRFI…GVLF, KDGV…LFLI, FSFL…ITDI, LGEL…ATYF, and GNLV…LIFA.

This sequence belongs to the UppP family.

Its subcellular location is the cell membrane. It catalyses the reaction di-trans,octa-cis-undecaprenyl diphosphate + H2O = di-trans,octa-cis-undecaprenyl phosphate + phosphate + H(+). Functionally, catalyzes the dephosphorylation of undecaprenyl diphosphate (UPP). Confers resistance to bacitracin. In Bacillus licheniformis (strain ATCC 14580 / DSM 13 / JCM 2505 / CCUG 7422 / NBRC 12200 / NCIMB 9375 / NCTC 10341 / NRRL NRS-1264 / Gibson 46), this protein is Undecaprenyl-diphosphatase 1.